The sequence spans 497 residues: NADH-quinone oxidoreductase subunit N (497 aa).

The next 14 helical transmembrane spans lie at 14 to 34 (LMAMLPILIVAGTVVLLMLSI), 45 to 65 (SLTVIGLNCALFSLYTVWGLF), 86 to 106 (IFYSGLVILASLATCTFAYPW), 116 to 136 (EFYLLLLISTLGALVLVSAQH), 137 to 157 (LAAVFLGIELIALPLFGLLGY), 171 to 191 (YFVLSAAASSFLLFGMAMLYA), 215 to 235 (ILAGMGMILVGFGFKLSLVPF), 253 to 273 (FLGTVGKIALLAGVMRFFLYV), 281 to 301 (LNTALSFMAVASIFFGNLMAL), 309 to 329 (LLGYSSIAHFGYLMIGLIALH), 338 to 358 (VAVYIVAYLFSSLGVLGVVSL), 385 to 405 (AAVMTIMLLSLAGIPMTLGFI), 420 to 439 (WVLTATVVIGSAIALYYYLR), and 461 to 481 (AFTAGGIVVWISALLVLVFGI).

This sequence belongs to the complex I subunit 2 family. In terms of assembly, NDH-1 is composed of 13 different subunits. Subunits NuoA, H, J, K, L, M, N constitute the membrane sector of the complex.

It is found in the cell membrane. It carries out the reaction a quinone + NADH + 5 H(+)(in) = a quinol + NAD(+) + 4 H(+)(out). Its function is as follows. NDH-1 shuttles electrons from NADH, via FMN and iron-sulfur (Fe-S) centers, to quinones in the respiratory chain. The immediate electron acceptor for the enzyme in this species is believed to be ubiquinone. Couples the redox reaction to proton translocation (for every two electrons transferred, four hydrogen ions are translocated across the cytoplasmic membrane), and thus conserves the redox energy in a proton gradient. The sequence is that of NADH-quinone oxidoreductase subunit N from Hamiltonella defensa subsp. Acyrthosiphon pisum (strain 5AT).